We begin with the raw amino-acid sequence, 409 residues long: Elongation factor Tu, chloroplastic (409 aa).

One can recognise a tr-type G domain in the interval 10-214 (KPHINIGTIG…AVDAYIPTPE (205 aa)). A G1 region spans residues 19-26 (GHVDHGKT). 19-26 (GHVDHGKT) is a binding site for GTP. Residue threonine 26 participates in Mg(2+) binding. Residues 60 to 64 (GITIN) are G2. The interval 81–84 (DCPG) is G3. GTP contacts are provided by residues 81–85 (DCPGH) and 136–139 (NKQD). A G4 region spans residues 136–139 (NKQD). Positions 174 to 176 (SRL) are G5.

The protein belongs to the TRAFAC class translation factor GTPase superfamily. Classic translation factor GTPase family. EF-Tu/EF-1A subfamily.

The protein localises to the plastid. Its subcellular location is the chloroplast. The enzyme catalyses GTP + H2O = GDP + phosphate + H(+). Functionally, GTP hydrolase that promotes the GTP-dependent binding of aminoacyl-tRNA to the A-site of ribosomes during protein biosynthesis. The polypeptide is Elongation factor Tu, chloroplastic (tufA) (Stephanocyclus meneghinianus (Diatom)).